A 310-amino-acid chain; its full sequence is Signal peptidase I (310 aa).

The helical transmembrane segment at 5–25 threads the bilayer; the sequence is LSSFLLASSLITGTLWIINKI. The Cytoplasmic segment spans residues 26–57; sequence LSHNLLDSKIPFNIKKSKIYYKSKQVVQTFAS. The helical transmembrane segment at 58–78 threads the bilayer; that stretch reads FFPILIIVFIIRTFICEPFQI. The Extracellular segment spans residues 79–310; sequence PSESMMPTLL…IQFDRIGNIY (232 aa). Residues Ser82 and Lys137 contribute to the active site.

It belongs to the peptidase S26 family.

It is found in the cell membrane. The enzyme catalyses Cleavage of hydrophobic, N-terminal signal or leader sequences from secreted and periplasmic proteins.. The protein is Signal peptidase I (lepB) of Buchnera aphidicola subsp. Baizongia pistaciae (strain Bp).